Reading from the N-terminus, the 326-residue chain is Olfactory receptor 11H1 (326 aa).

Residues 1–44 (MCPLTLQVTGLMNVSEPNSSFAFVNEFILQGFSCEWTIQIFLFS) lie on the Extracellular side of the membrane. 2 N-linked (GlcNAc...) asparagine glycosylation sites follow: asparagine 13 and asparagine 18. A helical membrane pass occupies residues 45–65 (LFTTTYALTITGNGAIAFVLW). At 66–72 (CDRRLHT) the chain is on the cytoplasmic side. The helical transmembrane segment at 73–93 (PMYMFLGNFSFLEIWYVSSTV) threads the bilayer. The Extracellular segment spans residues 94–112 (PKMLVNFLSEKKNISFAGC). N-linked (GlcNAc...) asparagine glycosylation is present at asparagine 106. A disulfide bridge connects residues cysteine 112 and cysteine 194. Residues 113 to 133 (FLQFYFFFSLGTSECLLLTVM) form a helical membrane-spanning segment. At 134 to 158 (AFDQYLAICRPLLYPNIMTGHLYAK) the chain is on the cytoplasmic side. The helical transmembrane segment at 159–179 (LVILCWVCGFLWFLIPIVLIS) threads the bilayer. Residues 180–216 (QMPFCGPNIIDHVVCDPGPRFALDCVSAPRIQLFCYT) lie on the Extracellular side of the membrane. Residues 217-237 (LSSLVIFGNFLFIIGSYTLVL) form a helical membrane-spanning segment. The Cytoplasmic segment spans residues 238 to 259 (KAMLGMPSSTGRHKAFSTCGSH). A helical membrane pass occupies residues 260–280 (LAVVSLCYSSLMVMYVSPGLG). Over 281–287 (HSTGMQK) the chain is Extracellular. Residues 288–308 (IETLFYAMVTPLFNPLIYSLQ) traverse the membrane as a helical segment. Residues 309–326 (NKEIKAALRKVLGSSNII) lie on the Cytoplasmic side of the membrane.

Belongs to the G-protein coupled receptor 1 family.

Its subcellular location is the cell membrane. Functionally, odorant receptor. This is Olfactory receptor 11H1 (OR11H1) from Homo sapiens (Human).